We begin with the raw amino-acid sequence, 1220 residues long: von Willebrand factor A domain-containing protein 5B1 (1220 aa).

A signal peptide spans 1 to 18; sequence MPGLLNWITGAALPLTAS. The VIT domain maps to 19-149; sequence DVTSCVSGYA…NVTIFISTSS (131 aa). N-linked (GlcNAc...) asparagine glycosylation occurs at Asn-140. The VWFA domain maps to 361–529; the sequence is EFIFLIDRSS…RLQPKMVKSL (169 aa). A glycan (N-linked (GlcNAc...) asparagine) is linked at Asn-650. The segment at 715 to 807 is disordered; the sequence is NSGQDLNQGP…SPSRPATPAP (93 aa). The span at 757–774 shows a compositional bias: basic and acidic residues; sequence VRERTSDSRSPGDLEPSH. Positions 796–807 are enriched in low complexity; sequence RASPSRPATPAP. Tyr-881 is subject to Phosphotyrosine. Disordered regions lie at residues 937–962 and 976–995; these read RGTS…GKFQ and EARS…QRSL. N-linked (GlcNAc...) asparagine glycosylation is present at Asn-1017. Over residues 1093-1111 the composition is skewed to polar residues; it reads TTRPSESKTPSPQLCTSSP. The tract at residues 1093 to 1115 is disordered; it reads TTRPSESKTPSPQLCTSSPPRHP.

Its subcellular location is the secreted. This Homo sapiens (Human) protein is von Willebrand factor A domain-containing protein 5B1 (VWA5B1).